The primary structure comprises 643 residues: 1-deoxy-D-xylulose-5-phosphate synthase (643 aa).

Thiamine diphosphate is bound by residues His78 and 119-121 (AHS). Asp150 contacts Mg(2+). Thiamine diphosphate contacts are provided by residues 151 to 152 (GS), Asn179, Tyr288, and Glu370. Residue Asn179 participates in Mg(2+) binding.

Belongs to the transketolase family. DXPS subfamily. Homodimer. The cofactor is Mg(2+). Thiamine diphosphate serves as cofactor.

It carries out the reaction D-glyceraldehyde 3-phosphate + pyruvate + H(+) = 1-deoxy-D-xylulose 5-phosphate + CO2. The protein operates within metabolic intermediate biosynthesis; 1-deoxy-D-xylulose 5-phosphate biosynthesis; 1-deoxy-D-xylulose 5-phosphate from D-glyceraldehyde 3-phosphate and pyruvate: step 1/1. Functionally, catalyzes the acyloin condensation reaction between C atoms 2 and 3 of pyruvate and glyceraldehyde 3-phosphate to yield 1-deoxy-D-xylulose-5-phosphate (DXP). This is 1-deoxy-D-xylulose-5-phosphate synthase from Brucella suis (strain ATCC 23445 / NCTC 10510).